Here is a 403-residue protein sequence, read N- to C-terminus: Esterase LipC (403 aa).

Catalysis depends on residues Ser-237, Asp-334, and His-367.

This sequence belongs to the 'GDXG' lipolytic enzyme family.

The protein localises to the cell surface. Its subcellular location is the secreted. It is found in the cell wall. The protein resides in the capsule. It catalyses the reaction a fatty acid ester + H2O = an aliphatic alcohol + a fatty acid + H(+). The catalysed reaction is a butanoate ester + H2O = an aliphatic alcohol + butanoate + H(+). The enzyme catalyses a hexanoate ester + H2O = an aliphatic alcohol + hexanoate + H(+). It carries out the reaction an acetyl ester + H2O = an aliphatic alcohol + acetate + H(+). It catalyses the reaction an octanoate ester + H2O = an aliphatic alcohol + octanoate + H(+). The catalysed reaction is decanoate ester + H2O = decanoate + an aliphatic alcohol + H(+). Esterase that can hydrolyze short-chain esters with the carbon chain containing 2 to 10 carbon atoms. Does not have lipase activity. Is highly immunogenic and elicits strong humoral immune responses in both HIV-negative (HIV-) and HIV-positive (HIV+) tuberculosis (TB) patients. Also elicits pro-inflammatory cytokine and chemokine responses from macrophages and pulmonary epithelial cells. May participate in the progression of active tuberculosis both by contributing to the utilization of lipid substrates for bacterial growth and replication, and by modulating immune responses. In Mycobacterium tuberculosis (strain ATCC 25618 / H37Rv), this protein is Esterase LipC.